The following is a 317-amino-acid chain: MEKVYVAGAIPEVGLKLLQEHFEVEMYEGKGLVDKDTLIKGVKDATALISLLSTNVDKDVIDAGKDLKIIANYGAGFNNIDIEYAREKSIDVTNTPKASTNATADLTIGLVLAVARRIVEGDQLSRTTGFDGWAPLFFRGREVSGKTIGIIGLGEIGSAVARRARAFDMDVLYTGPNRKEEKEREIGAKYVDLDTLLKNADFITINAAYNPKMHHLIDTEQFKMMKSTAYLINASRGPIVHEQALVQALKNNEIEGAALDVYEFEPDITDDLKSLNNVVLTPHIGNATFEARDMMSKIVANAAISAVQGEKPQFVVN.

Residues 155–156 (EI), 234–236 (ASR), and Asp260 each bind NAD(+). Residue Arg236 is part of the active site. Glu265 is an active-site residue. The Proton donor role is filled by His283. 283-286 (HIGN) is a binding site for NAD(+).

It belongs to the D-isomer specific 2-hydroxyacid dehydrogenase family.

The protein is Putative 2-hydroxyacid dehydrogenase SAR2389 of Staphylococcus aureus (strain MRSA252).